The following is a 175-amino-acid chain: Large ribosomal subunit protein uL6 (175 aa).

This sequence belongs to the universal ribosomal protein uL6 family. Part of the 50S ribosomal subunit.

This protein binds to the 23S rRNA, and is important in its secondary structure. It is located near the subunit interface in the base of the L7/L12 stalk, and near the tRNA binding site of the peptidyltransferase center. The sequence is that of Large ribosomal subunit protein uL6 from Xanthomonas campestris pv. campestris (strain 8004).